The sequence spans 488 residues: BRAP2 RING ZnF UBP domain-containing protein 1 (488 aa).

The segment at 174-214 (CPICLERLDPDTSGIVSTLCDHSFQCSCTSKWTYLSCQVCR) adopts an RING-type; degenerate zinc-finger fold. The UBP-type; degenerate zinc finger occupies 208–301 (LSCQVCRLCQ…GKSVEMSTSC (94 aa)). The Zn(2+) site is built by Cys-225, Cys-228, Cys-237, Cys-240, Cys-245, His-252, His-256, and His-262. Residues 370–418 (EQIVVNTMQELQNKIEKCEEEKSGITEVNTKLIKEQDTWRKKAKEIEER) adopt a coiled-coil conformation. A disordered region spans residues 453 to 488 (MSSDTDGIREGTVLPVPISPEPVSSVRRQKKSNRRK). Residues 465 to 478 (VLPVPISPEPVSSV) show a composition bias toward low complexity. Residues 479–488 (RRQKKSNRRK) are compositionally biased toward basic residues.

As to quaternary structure, component of the heteromeric E3 ligase complex made of BRIZ1 and BRIZ2. Forms heterooligomers with BRIZ2 via coiled-coil domains.

It catalyses the reaction S-ubiquitinyl-[E2 ubiquitin-conjugating enzyme]-L-cysteine + [acceptor protein]-L-lysine = [E2 ubiquitin-conjugating enzyme]-L-cysteine + N(6)-ubiquitinyl-[acceptor protein]-L-lysine.. The protein operates within protein modification; protein ubiquitination. In terms of biological role, RING-type ubiquitin E3 ligase required for seed germination and post-germination growth. The polypeptide is BRAP2 RING ZnF UBP domain-containing protein 1 (Arabidopsis thaliana (Mouse-ear cress)).